A 569-amino-acid polypeptide reads, in one-letter code: Laccase-13 (569 aa).

An N-terminal signal peptide occupies residues 1–21 (MEQLRPFFLLLAIFVASLVNA). 2 Plastocyanin-like domains span residues 29–145 (VIQE…PPLS) and 157–308 (REIT…YKDA). Residue Asn-75 is glycosylated (N-linked (GlcNAc...) asparagine). Cu cation contacts are provided by His-79, His-81, His-124, and His-126. Asn-186, Asn-296, Asn-330, Asn-381, Asn-391, and Asn-432 each carry an N-linked (GlcNAc...) asparagine glycan. The region spanning 418-553 (DFPPTPPVTF…AMVFLVENGE (136 aa)) is the Plastocyanin-like 3 domain. Cu cation-binding residues include His-470, His-473, His-475, His-532, Cys-533, His-534, and His-538.

The protein belongs to the multicopper oxidase family. The cofactor is Cu cation. In terms of tissue distribution, mostly expressed in roots. Also detected in leaves, stems and flowers but not in siliques.

It is found in the secreted. Its subcellular location is the extracellular space. The protein resides in the apoplast. It carries out the reaction 4 hydroquinone + O2 = 4 benzosemiquinone + 2 H2O. Functionally, lignin degradation and detoxification of lignin-derived products. The protein is Laccase-13 (LAC13) of Arabidopsis thaliana (Mouse-ear cress).